We begin with the raw amino-acid sequence, 369 residues long: Deoxyuridine 5'-triphosphate nucleotidohydrolase (369 aa).

Substrate contacts are provided by residues 258–260 and 364–365; these read RSS and FG.

Belongs to the dUTPase family. It depends on Mg(2+) as a cofactor.

The catalysed reaction is dUTP + H2O = dUMP + diphosphate + H(+). In terms of biological role, involved in nucleotide metabolism: produces dUMP, the immediate precursor of thymidine nucleotides and decreases the intracellular concentration of dUTP to avoid uracil incorporation into viral DNA. This is Deoxyuridine 5'-triphosphate nucleotidohydrolase from Homo sapiens (Human).